The following is a 443-amino-acid chain: Glutamate-rich protein 1 (443 aa).

At Lys12 the chain carries N6-acetyllysine. Positions 15-333 (QRLFPPVPSG…DASEEDDTIT (319 aa)) are disordered. The span at 42–54 (VTSEKVSQKHAEP) shows a compositional bias: basic and acidic residues. The segment covering 87–97 (SCGSPENASSG) has biased composition (polar residues). Basic residues-rich tracts occupy residues 109–124 (PKRR…KKFK) and 159–176 (KNKK…RKKA). Acidic residues predominate over residues 205–226 (ACEEDGVDTSEEDPTLAGEEDV). 2 positions are modified to phosphoserine: Ser238 and Ser254. The segment covering 250-266 (GADASEEDPTPAGEEDV) has biased composition (acidic residues). Position 277 is a phosphothreonine (Thr277). The span at 281–296 (DLTRAGEEDGKDTREE) shows a compositional bias: basic and acidic residues. Positions 297–332 (DGADASEEDPTWAGEEEGADSGEEDGADASEEDDTI) are enriched in acidic residues.

In Homo sapiens (Human), this protein is Glutamate-rich protein 1 (ERICH1).